The sequence spans 158 residues: NAD(P)H-quinone oxidoreductase subunit J, chloroplastic (158 aa).

Belongs to the complex I 30 kDa subunit family. In terms of assembly, NDH is composed of at least 16 different subunits, 5 of which are encoded in the nucleus.

It is found in the plastid. The protein resides in the chloroplast thylakoid membrane. It catalyses the reaction a plastoquinone + NADH + (n+1) H(+)(in) = a plastoquinol + NAD(+) + n H(+)(out). It carries out the reaction a plastoquinone + NADPH + (n+1) H(+)(in) = a plastoquinol + NADP(+) + n H(+)(out). Its function is as follows. NDH shuttles electrons from NAD(P)H:plastoquinone, via FMN and iron-sulfur (Fe-S) centers, to quinones in the photosynthetic chain and possibly in a chloroplast respiratory chain. The immediate electron acceptor for the enzyme in this species is believed to be plastoquinone. Couples the redox reaction to proton translocation, and thus conserves the redox energy in a proton gradient. The chain is NAD(P)H-quinone oxidoreductase subunit J, chloroplastic from Ranunculus macranthus (Large buttercup).